We begin with the raw amino-acid sequence, 102 residues long: Small ribosomal subunit protein uS10 (102 aa).

The protein belongs to the universal ribosomal protein uS10 family. Part of the 30S ribosomal subunit.

Involved in the binding of tRNA to the ribosomes. The protein is Small ribosomal subunit protein uS10 of Brevibacillus brevis (strain 47 / JCM 6285 / NBRC 100599).